The following is a 119-amino-acid chain: Thioredoxin H4 (119 aa).

The 114-residue stretch at 2–115 folds into the Thioredoxin domain; sequence AAEEGQVIGC…LQAKIVKHTG (114 aa). Catalysis depends on nucleophile residues cysteine 40 and cysteine 43. A disulfide bond links cysteine 40 and cysteine 43.

The protein belongs to the thioredoxin family. Plant H-type subfamily. In terms of assembly, interacts with MDH1.

It localises to the cytoplasm. In terms of biological role, thiol-disulfide oxidoreductase probably involved in the redox regulation of a number of cytosolic enzymes. Possesses insulin disulfide bonds reducing activity. The sequence is that of Thioredoxin H4 (TRX4) from Arabidopsis thaliana (Mouse-ear cress).